A 1358-amino-acid chain; its full sequence is Insulin-like growth factor 1 receptor (1358 aa).

A signal peptide spans 1–25; the sequence is MKAELVPVCTAWILGLLLCLGPAAA. A disulfide bridge connects residues C28 and C47. Residues N74, N99, and N132 are each glycosylated (N-linked (GlcNAc...) asparagine). Disulfide bonds link C147–C175, C179–C202, C189–C208, C212–C221, C216–C227, C228–C236, C232–C245, C248–C257, C261–C273, C279–C299, C303–C317, C320–C324, and C328–C347. N-linked (GlcNAc...) asparagine glycosylation is present at N241. N-linked (GlcNAc...) asparagine glycosylation occurs at N310. N-linked (GlcNAc...) asparagine glycans are attached at residues N411 and N432. C449 and C482 are oxidised to a cystine. 4 Fibronectin type-III domains span residues 483 to 603, 604 to 702, 727 to 818, and 829 to 924; these read ESHV…TDAA, VPSI…TEAE, PRPN…FVFA, and IPGI…LKPD. Residues N488, N528, N616, N634, and N669 are each glycosylated (N-linked (GlcNAc...) asparagine). Residues 670–691 form a disordered region; the sequence is GTIDTEGGTEPTKPEGSVGEKG. The Extracellular segment spans residues 735-934; it reads DVLAVGNSTV…VRNNILQMVV (200 aa). 5 N-linked (GlcNAc...) asparagine glycosylation sites follow: N741, N750, N758, N895, and N908. Residues 935–955 form a helical membrane-spanning segment; sequence AIPLALSFLLVGIISIVCFVF. Residues 956-1358 are Cytoplasmic-facing; it reads KKRNSNRLGN…ALPLPQSSAC (403 aa). A Phosphotyrosine; by autocatalysis modification is found at Y976. The region spanning 995–1270 is the Protein kinase domain; it reads ITMNRELGQG…SIKDELDPGF (276 aa). ATP-binding positions include 1001–1009 and K1029; that span reads LGQGSFGMV. The Proton acceptor role is filled by D1131. Phosphotyrosine; by autocatalysis occurs at positions 1157, 1161, and 1162. Residues 1336 to 1358 form a disordered region; sequence PYAHMNGGRKNERALPLPQSSAC.

This sequence belongs to the protein kinase superfamily. Tyr protein kinase family. Insulin receptor subfamily. As to quaternary structure, tetramer of 2 alpha and 2 beta chains linked by disulfide bonds. The alpha chains contribute to the formation of the ligand-binding domain, while the beta chain carries the kinase domain. The cofactor is Mn(2+). The cytoplasmic domain of the beta subunit is autophosphorylated on Tyr residues in response to low concentrations of insulin-like growth factor (IGF1) and higher concentrations of insulin.

The protein localises to the cell membrane. The enzyme catalyses L-tyrosyl-[protein] + ATP = O-phospho-L-tyrosyl-[protein] + ADP + H(+). With respect to regulation, autophosphorylation activates the kinase activity. Functionally, this receptor binds insulin-like growth factor 1 (IGF1) with a high affinity and IGF2 with a lower affinity. It has a tyrosine-protein kinase activity, which is necessary for the activation of the IGF1-stimulated downstream signaling cascade. Plays a role in oocyte maturation. Promotes head development by inhibiting Wnt signaling during embryogenesis. In Xenopus laevis (African clawed frog), this protein is Insulin-like growth factor 1 receptor (igf1r).